The chain runs to 523 residues: FAD-dependent monooxygenase drtC (523 aa).

One can recognise an FAD-binding PCMH-type domain in the interval 77–252; the sequence is TSLNSACIVL…TNFEVRAFPQ (176 aa).

It belongs to the oxygen-dependent FAD-linked oxidoreductase family. Requires FAD as cofactor.

It participates in secondary metabolite biosynthesis; terpenoid biosynthesis. FAD-dependent monooxygenase; part of the gene cluster that mediates the biosynthesis of various drimane-type sesquiterpene esters, compounds that exhibit diverse biological activities and are widely present in eukaryotes. The pathway begins with the synthesis of the backbone drimenol by the terpene cyclase drtB using farnesyl pyrophosphate (FPP) as substrate. The cytochrome P450 monooxygenase drtD is then responsible for the hydroxylations at C-6, C-9 and C-12, as well as the oxidation of hydroxyl groups at C-6 and C-11 to a ketone and an aldehyde, respectively. Then, the biosynthesis can go in two directions, either the hydroxylated drimenol is further hydroxylated at C-2 and C-3 by an enzyme(s) not associated with the drt cluster, or the FAD-binding oxidoreductase drtC further oxidizes C-11 or C-12 to form the butyrolactone ring. DrtB, drtD and drtC are solely responsible for the formation of the different drimane structures observed during drimane sesquiterpenes biosynthesis. The polyketide synthase drtA synthesizes different lengths (C6 and C8) of PKS chains, which are then oxidized to varying degrees by the short-chain dehydrogenase drtF. Finally, these PKS chains are transferred onto drimane sesquiterpenes by the acyltransferase drtE, forming the sesquiterpene esters. In addition to the different fatty acyl-CoA chains produced by drtA, drtE is also able to use cinnamoyl-CoA as a substrate. This chain is FAD-dependent monooxygenase drtC, found in Aspergillus calidoustus.